A 25-amino-acid chain; its full sequence is Insulin mimetic protein (25 aa).

The interval Thr-1–Lys-25 is disordered.

Post-translationally, glycosylated. In terms of tissue distribution, expressed in seed.

This is Insulin mimetic protein from Cnidoscolus quercifolius.